The chain runs to 96 residues: Keratin-associated protein 12-1 (96 aa).

A run of 14 repeats spans residues 10–14 (CQPAC), 15–19 (CAPSP), 24–28 (CYIPV), 30–34 (CQSSV), 35–39 (CVPVS), 45–49 (CVPVR), 50–54 (CQSSV), 55–59 (CVPVS), 60–64 (CRPVV), 70–74 (CQSSG), 75–79 (CCQPS), 80–84 (CTSVL), 85–89 (CRPIS), and 90–94 (CSTPS). The segment at 10 to 94 (CQPACCAPSP…CRPISCSTPS (85 aa)) is 14 X 5 AA approximate repeats.

It belongs to the KRTAP type 12 family. As to quaternary structure, interacts with hair keratins. Restricted to a narrow region of the hair fiber cuticle, lying approximately 20 cell layers above the apex of the dermal papilla of the hair root; not detected in any other tissues.

Its function is as follows. In the hair cortex, hair keratin intermediate filaments are embedded in an interfilamentous matrix, consisting of hair keratin-associated proteins (KRTAP), which are essential for the formation of a rigid and resistant hair shaft through their extensive disulfide bond cross-linking with abundant cysteine residues of hair keratins. The matrix proteins include the high-sulfur and high-glycine-tyrosine keratins. This is Keratin-associated protein 12-1 (KRTAP12-1) from Homo sapiens (Human).